Consider the following 375-residue polypeptide: uncharacterized protein (375 aa).

A disordered region spans residues 54–78 (EGIPPPTQSQEPLKPQENISRPIHH).

This is an uncharacterized protein from Bos taurus (Bovine).